The primary structure comprises 643 residues: Threonine--tRNA ligase (643 aa).

In terms of domain architecture, TGS spans Met1–Thr61. The segment at Asp243–Pro534 is catalytic. Zn(2+)-binding residues include Cys334, His385, and His511.

The protein belongs to the class-II aminoacyl-tRNA synthetase family. Homodimer. It depends on Zn(2+) as a cofactor.

The protein resides in the cytoplasm. The catalysed reaction is tRNA(Thr) + L-threonine + ATP = L-threonyl-tRNA(Thr) + AMP + diphosphate + H(+). Functionally, catalyzes the attachment of threonine to tRNA(Thr) in a two-step reaction: L-threonine is first activated by ATP to form Thr-AMP and then transferred to the acceptor end of tRNA(Thr). Also edits incorrectly charged L-seryl-tRNA(Thr). This is Threonine--tRNA ligase from Haemophilus influenzae (strain PittEE).